Here is a 611-residue protein sequence, read N- to C-terminus: DNA mismatch repair protein MutL (611 aa).

Residues 353–387 (NRQAAGGNHFATPAPAAAPRPASTASSSWQRQEPV) are disordered. A compositionally biased stretch (low complexity) spans 363-380 (ATPAPAAAPRPASTASSS).

The protein belongs to the DNA mismatch repair MutL/HexB family.

Functionally, this protein is involved in the repair of mismatches in DNA. It is required for dam-dependent methyl-directed DNA mismatch repair. May act as a 'molecular matchmaker', a protein that promotes the formation of a stable complex between two or more DNA-binding proteins in an ATP-dependent manner without itself being part of a final effector complex. The polypeptide is DNA mismatch repair protein MutL (Erwinia tasmaniensis (strain DSM 17950 / CFBP 7177 / CIP 109463 / NCPPB 4357 / Et1/99)).